We begin with the raw amino-acid sequence, 286 residues long: uncharacterized protein (286 aa).

The segment at 152-182 (YPSTTTSVTPGKKGEKTTKVDGFSSPLNQDT) is disordered. Residues 198–218 (VLIAVTLFVSGIAITVFVIFE) traverse the membrane as a helical segment. Positions 239 to 278 (RRPRKEDQQPGTAESQSDTQPKKVGQEAPNSSSPKKAVEI) are disordered. Over residues 247–257 (QPGTAESQSDT) the composition is skewed to polar residues.

The protein resides in the membrane. This is an uncharacterized protein from Bos taurus (Bovine).